Here is a 1342-residue protein sequence, read N- to C-terminus: DNA-directed RNA polymerase subunit beta (1342 aa).

It belongs to the RNA polymerase beta chain family. The RNAP catalytic core consists of 2 alpha, 1 beta, 1 beta' and 1 omega subunit. When a sigma factor is associated with the core the holoenzyme is formed, which can initiate transcription.

The enzyme catalyses RNA(n) + a ribonucleoside 5'-triphosphate = RNA(n+1) + diphosphate. DNA-dependent RNA polymerase catalyzes the transcription of DNA into RNA using the four ribonucleoside triphosphates as substrates. The protein is DNA-directed RNA polymerase subunit beta of Pectobacterium carotovorum subsp. carotovorum (strain PC1).